The primary structure comprises 498 residues: ATP synthase subunit beta, chloroplastic (498 aa).

Residue 172–179 (GGAGVGKT) coordinates ATP.

This sequence belongs to the ATPase alpha/beta chains family. In terms of assembly, F-type ATPases have 2 components, CF(1) - the catalytic core - and CF(0) - the membrane proton channel. CF(1) has five subunits: alpha(3), beta(3), gamma(1), delta(1), epsilon(1). CF(0) has four main subunits: a(1), b(1), b'(1) and c(9-12).

The protein resides in the plastid. The protein localises to the chloroplast thylakoid membrane. It carries out the reaction ATP + H2O + 4 H(+)(in) = ADP + phosphate + 5 H(+)(out). Produces ATP from ADP in the presence of a proton gradient across the membrane. The catalytic sites are hosted primarily by the beta subunits. This Liriodendron tulipifera (Tuliptree) protein is ATP synthase subunit beta, chloroplastic.